We begin with the raw amino-acid sequence, 652 residues long: Engulfment and cell motility protein 3 (652 aa).

The ELMO domain occupies Glu307–Leu479.

In terms of assembly, probably interacts directly with the SH3-domain of DOCK1 via its SH3-binding site. Part of a complex with DOCK1 and RAC1. Interacts with ADGRB3.

It localises to the cytoplasm. Involved in cytoskeletal rearrangements required for phagocytosis of apoptotic cells and cell motility. Acts in association with DOCK1 and CRK. Was initially proposed to be required in complex with DOCK1 to activate Rac Rho small GTPases. May enhance the guanine nucleotide exchange factor (GEF) activity of DOCK1. The sequence is that of Engulfment and cell motility protein 3 (ELMO3) from Bos taurus (Bovine).